A 239-amino-acid polypeptide reads, in one-letter code: Ribosomal RNA small subunit methyltransferase G (239 aa).

S-adenosyl-L-methionine-binding positions include Gly-77, Phe-82, 128 to 129, and Arg-146; that span reads AE. The tract at residues 215–239 is disordered; that stretch reads DKKRQTPKKYPRKPGTPNKTPLLEK.

This sequence belongs to the methyltransferase superfamily. RNA methyltransferase RsmG family.

It localises to the cytoplasm. In terms of biological role, specifically methylates the N7 position of guanine in position 535 of 16S rRNA. The sequence is that of Ribosomal RNA small subunit methyltransferase G from Staphylococcus aureus (strain USA300).